We begin with the raw amino-acid sequence, 416 residues long: Multifunctional CCA protein (416 aa).

ATP is bound by residues G8 and R11. Residues G8 and R11 each coordinate CTP. Residues D21 and D23 each coordinate Mg(2+). Positions 91, 137, and 140 each coordinate ATP. CTP-binding residues include R91, R137, and R140. The HD domain occupies 228–329 (TGLHTMMVLA…IKLFDKADFW (102 aa)).

This sequence belongs to the tRNA nucleotidyltransferase/poly(A) polymerase family. Bacterial CCA-adding enzyme type 1 subfamily. As to quaternary structure, monomer. Can also form homodimers and oligomers. The cofactor is Mg(2+). Ni(2+) serves as cofactor.

It carries out the reaction a tRNA precursor + 2 CTP + ATP = a tRNA with a 3' CCA end + 3 diphosphate. It catalyses the reaction a tRNA with a 3' CCA end + 2 CTP + ATP = a tRNA with a 3' CCACCA end + 3 diphosphate. Catalyzes the addition and repair of the essential 3'-terminal CCA sequence in tRNAs without using a nucleic acid template. Adds these three nucleotides in the order of C, C, and A to the tRNA nucleotide-73, using CTP and ATP as substrates and producing inorganic pyrophosphate. tRNA 3'-terminal CCA addition is required both for tRNA processing and repair. Also involved in tRNA surveillance by mediating tandem CCA addition to generate a CCACCA at the 3' terminus of unstable tRNAs. While stable tRNAs receive only 3'-terminal CCA, unstable tRNAs are marked with CCACCA and rapidly degraded. In Shewanella sp. (strain MR-4), this protein is Multifunctional CCA protein.